The primary structure comprises 278 residues: Octanoyltransferase LipM (278 aa).

In terms of domain architecture, BPL/LPL catalytic spans 33–248 (KKMPPTIRFY…GFEKGLDVEL (216 aa)). Cys150 acts as the Acyl-thioester intermediate in catalysis.

The protein belongs to the octanoyltransferase LipM family. Monomer.

It catalyses the reaction octanoyl-[ACP] + L-lysyl-[protein] = N(6)-octanoyl-L-lysyl-[protein] + holo-[ACP] + H(+). It functions in the pathway protein modification; protein lipoylation via endogenous pathway; protein N(6)-(lipoyl)lysine from octanoyl-[acyl-carrier-protein]. Functionally, catalyzes the transfer of endogenously produced octanoic acid from octanoyl-acyl-carrier-protein onto the lipoyl domain of GcvH, an intermediate carrier during protein lipoylation. The protein is Octanoyltransferase LipM of Bacillus cereus (strain ATCC 14579 / DSM 31 / CCUG 7414 / JCM 2152 / NBRC 15305 / NCIMB 9373 / NCTC 2599 / NRRL B-3711).